A 216-amino-acid chain; its full sequence is Pyrophosphatase PpaX (216 aa).

Residue Asp9 is the Nucleophile of the active site.

This sequence belongs to the HAD-like hydrolase superfamily. PpaX family. Requires Mg(2+) as cofactor.

The catalysed reaction is diphosphate + H2O = 2 phosphate + H(+). Hydrolyzes pyrophosphate formed during P-Ser-HPr dephosphorylation by HPrK/P. Might play a role in controlling the intracellular pyrophosphate pool. This is Pyrophosphatase PpaX from Bacillus anthracis (strain CDC 684 / NRRL 3495).